The chain runs to 67 residues: Conotoxin VnMMSK-02 (67 aa).

Residues 1–20 (MMSKLGALLTICLLLFPLTA) form the signal peptide. Positions 21-52 (LPLDGDQPADRPAERMQDDISSEQHPLFDKER) are excised as a propeptide. Position 53 is a pyrrolidone carboxylic acid (glutamine 53). Cystine bridges form between cysteine 54–cysteine 66, cysteine 55–cysteine 62, and cysteine 59–cysteine 65. Proline 64 carries the post-translational modification 4-hydroxyproline. Position 66 is a cysteine amide (cysteine 66).

This sequence belongs to the conotoxin M superfamily. As to expression, expressed by the venom duct.

It is found in the secreted. In Conus ventricosus (Mediterranean cone), this protein is Conotoxin VnMMSK-02.